The following is a 1348-amino-acid chain: Vascular endothelial growth factor receptor 2 (1348 aa).

Residues 1–20 (MELGPLRVLTVLLCLAPVFA) form the signal peptide. The Extracellular segment spans residues 21–756 (GLFISMDQPT…GAEEKTNLEL (736 aa)). N43, N47, N63, N93, N138, N153, N201, N240, N290, N310, N365, N386, N513, N556, N603, N613, N622, N666, N688, and N710 each carry an N-linked (GlcNAc...) asparagine glycan. 7 Ig-like C2-type domains span residues 43–106 (NDTL…GDSQ), 138–202 (NKTV…IDNE), 220–312 (DLTM…KNSS), 320–405 (PFIH…HTFT), 412–534 (PQIG…RVIS), 540–651 (GLEI…KHLT), and 658–744 (PRLV…AFFS). An intrachain disulfide couples C50 to C100. A disulfide bond links C145 and C195. A disulfide bridge connects residues C241 and C299. C436 and C520 are disulfide-bonded. Residues C561 and C633 are joined by a disulfide bond. C679 and C728 are disulfide-bonded. A helical membrane pass occupies residues 757 to 777 (IILVGTAVIAMFFWLLLVIIL). The Cytoplasmic segment spans residues 778-1348 (RTVKRANGGD…SPAPVASLPL (571 aa)). Positions 825 to 1155 (LKLGKPLGRG…FSELVEHLGN (331 aa)) constitute a Protein kinase domain. ATP-binding positions include 831-839 (LGRGAFGQV) and K859. Low complexity predominate over residues 958 to 967 (ITSSQSSTSS). Residues 958–983 (ITSSQSSTSSGFVEERSLSDVEEEDA) are disordered. Residue D1021 is the Proton acceptor of the active site. Residues Y1047, Y1052, Y1168, and Y1207 each carry the phosphotyrosine; by autocatalysis modification. The disordered stretch occupies residues 1280-1302 (PSKSNESVMSEASNQTSGYQSGY).

It belongs to the protein kinase superfamily. Tyr protein kinase family. CSF-1/PDGF receptor subfamily. Autophosphorylated on tyrosine residues upon ligand binding. Autophosphorylation occurs in trans, i.e. one subunit of the dimeric receptor phosphorylates tyrosine residues on the other subunit. As to expression, in all endothelial tissues during onset of vascularization. In later development, present in lung, heart, intestine and skin.

The protein resides in the cell membrane. It is found in the cytoplasmic vesicle. Its subcellular location is the early endosome. The protein localises to the cell junction. It localises to the endoplasmic reticulum. It carries out the reaction L-tyrosyl-[protein] + ATP = O-phospho-L-tyrosyl-[protein] + ADP + H(+). Its activity is regulated as follows. Present in an inactive conformation in the absence of bound ligand. Binding of VEGFA, VEGFC or VEGFD leads to dimerization and activation by autophosphorylation on tyrosine residues. Tyrosine-protein kinase that acts as a cell-surface receptor for VEGFA, VEGFC and/or VEGFD and plays an essential role in the regulation of angiogenesis and vascular development. Promotes proliferation, survival, migration and differentiation of endothelial cells. Promotes reorganization of the actin cytoskeleton. Binding of vascular growth factors leads to the activation of several signaling cascades. Activation of PLCG1 leads to the production of the cellular signaling molecules diacylglycerol and inositol 1,4,5-trisphosphate and the activation of protein kinase C. Mediates activation of MAPK1/ERK2, MAPK3/ERK1 and the MAP kinase signaling pathway, as well as of the AKT1 signaling pathway. Mediates phosphorylation of PIK3R1, the regulatory subunit of phosphatidylinositol 3-kinase, reorganization of the actin cytoskeleton and activation of PTK2/FAK1. Required for VEGFA-mediated induction of NOS2 and NOS3, leading to the production of the signaling molecule nitric oxide (NO) by endothelial cells. In Coturnix japonica (Japanese quail), this protein is Vascular endothelial growth factor receptor 2.